A 387-amino-acid chain; its full sequence is Succinate--CoA ligase [ADP-forming] subunit beta (387 aa).

One can recognise an ATP-grasp domain in the interval K9–K245. ATP is bound by residues K46, G53 to G55, E100, Y103, and E108. Mg(2+) contacts are provided by N200 and D214. Residues N265 and G322–V324 each bind substrate.

Belongs to the succinate/malate CoA ligase beta subunit family. Heterotetramer of two alpha and two beta subunits. Mg(2+) serves as cofactor.

The catalysed reaction is succinate + ATP + CoA = succinyl-CoA + ADP + phosphate. It carries out the reaction GTP + succinate + CoA = succinyl-CoA + GDP + phosphate. It functions in the pathway carbohydrate metabolism; tricarboxylic acid cycle; succinate from succinyl-CoA (ligase route): step 1/1. In terms of biological role, succinyl-CoA synthetase functions in the citric acid cycle (TCA), coupling the hydrolysis of succinyl-CoA to the synthesis of either ATP or GTP and thus represents the only step of substrate-level phosphorylation in the TCA. The beta subunit provides nucleotide specificity of the enzyme and binds the substrate succinate, while the binding sites for coenzyme A and phosphate are found in the alpha subunit. This chain is Succinate--CoA ligase [ADP-forming] subunit beta, found in Francisella tularensis subsp. mediasiatica (strain FSC147).